The chain runs to 109 residues: SRA stem-loop-interacting RNA-binding protein, mitochondrial (109 aa).

Phosphoserine is present on serine 15. The RRM domain maps to 19 to 103 (PVAFVRRIPW…RRPKLPQTSD (85 aa)). Position 101 is a phosphothreonine (threonine 101). Serine 102 is subject to Phosphoserine.

The protein localises to the mitochondrion. The protein resides in the nucleus. Its function is as follows. RNA-binding protein that acts as a nuclear receptor corepressor. Probably acts by binding the SRA RNA, and repressing the SRA-mediated nuclear receptor coactivation. Binds the STR7 loop of SRA RNA. Also able to repress glucocorticoid (GR), androgen (AR), thyroid (TR) and VDR-mediated transactivation. This chain is SRA stem-loop-interacting RNA-binding protein, mitochondrial (SLIRP), found in Pongo abelii (Sumatran orangutan).